We begin with the raw amino-acid sequence, 320 residues long: 33 kDa chaperonin (320 aa).

The segment covering 1 to 17 (MTDASGSERLKRTKDIS) has biased composition (basic and acidic residues). A disordered region spans residues 1–27 (MTDASGSERLKRTKDISESTPPSSLPD). 2 cysteine pairs are disulfide-bonded: C262–C264 and C295–C298.

It belongs to the HSP33 family. In terms of processing, under oxidizing conditions two disulfide bonds are formed involving the reactive cysteines. Under reducing conditions zinc is bound to the reactive cysteines and the protein is inactive.

It localises to the cytoplasm. Functionally, redox regulated molecular chaperone. Protects both thermally unfolding and oxidatively damaged proteins from irreversible aggregation. Plays an important role in the bacterial defense system toward oxidative stress. This is 33 kDa chaperonin from Synechococcus sp. (strain JA-3-3Ab) (Cyanobacteria bacterium Yellowstone A-Prime).